The following is a 153-amino-acid chain: UPF0102 protein Pnap_0271 (153 aa).

This sequence belongs to the UPF0102 family.

The protein is UPF0102 protein Pnap_0271 of Polaromonas naphthalenivorans (strain CJ2).